A 386-amino-acid polypeptide reads, in one-letter code: Antilisterial bacteriocin subtilosin biosynthesis protein AlbE (386 aa).

Its function is as follows. Involved in the production of the bacteriocin subtilosin. This chain is Antilisterial bacteriocin subtilosin biosynthesis protein AlbE (albE), found in Bacillus subtilis.